A 178-amino-acid polypeptide reads, in one-letter code: UPF0098 protein PYRAB11530 (178 aa).

The first 22 residues, 1 to 22 (MRYLVPLLVFMVLGMGCLGGGG), serve as a signal peptide directing secretion.

This sequence belongs to the UPF0098 family.

This chain is UPF0098 protein PYRAB11530, found in Pyrococcus abyssi (strain GE5 / Orsay).